The primary structure comprises 309 residues: Tumor necrosis factor ligand superfamily member 13B (309 aa).

The Cytoplasmic portion of the chain corresponds to 1–47 (MDESAKTLPPPCLCFCSEKGEDMKVGYDPITPQKEEGAWFGICRDGR). Residues 48 to 68 (LLAATLLLALLSSSFTAMSLY) form a helical; Signal-anchor for type II membrane protein membrane-spanning segment. Residues 69–309 (QLAALQADLM…DTFFGALKLL (241 aa)) are Extracellular-facing. The segment at 110 to 140 (PAAPRPHNSSRGHRNRRAFQGPEETEQDVDL) is disordered. Residues Asn117 and Asn266 are each glycosylated (N-linked (GlcNAc...) asparagine). The span at 117–126 (NSSRGHRNRR) shows a compositional bias: basic residues. Positions 169 to 308 (DCLQLIADSD…DDTFFGALKL (140 aa)) constitute a THD domain. Cysteines 256 and 269 form a disulfide.

Belongs to the tumor necrosis factor family. In terms of assembly, homotrimer. Isoform 2 heteromultimerizes with isoform 1, probably limiting the amount of functional isoform 1 on the cell surface. Post-translationally, the soluble form derives from the membrane form by proteolytic processing. Isoform 2 is not efficiently shed from the membrane unlike isoform 1. As to expression, isoform 2 is expressed in many myeloid cell lines.

It is found in the cell membrane. Its subcellular location is the secreted. Functionally, cytokine that binds to TNFRSF13B/TACI and TNFRSF17/BCMA. TNFSF13/APRIL binds to the same 2 receptors. Together, they form a 2 ligands -2 receptors pathway involved in the stimulation of B- and T-cell function and the regulation of humoral immunity. A third B-cell specific BAFF-receptor (BAFFR/BR3) promotes the survival of mature B-cells and the B-cell response. In terms of biological role, isoform 2 seems to inhibit isoform 1 secretion and bioactivity. The protein is Tumor necrosis factor ligand superfamily member 13B (Tnfsf13b) of Mus musculus (Mouse).